The following is a 404-amino-acid chain: MPYNFCLPSLSCRTSCSSRPCVPPSCHGYTLPGACNIPANVSNCNWFCEGSFNGSEKETMQFLNDRLASYLEKVRQLERDNAELENLIRERSQQQEPLLCPSYQSYFKTIEELQQKILCSKSENARLVVQIDNAKLAADDFRTKYQTEQSLRQLVESDINSLRRILDELTLCRSDLEAQMESLKEELLSLKQNHEQEVNTLRCQLGDRLNVEVDAAPAVDLNQVLNETRNQYEALVETNRREVEQWFATQTEELNKQVVSSSEQLQSYQAEIIELRRTVNALEIELQAQHNLRYSLENTLTESEARYSSQLSQVQSLITNVESQLAEIRSDLERQNQEYQVLLDVRARLECEINTYRSLLESEDCKLPSNPCATTNACEKPIGSCVTNPCGPRSRCGPCNTFGY.

The interval 1-56 (MPYNFCLPSLSCRTSCSSRPCVPPSCHGYTLPGACNIPANVSNCNWFCEGSFNGSE) is head. An IF rod domain is found at 56-367 (EKETMQFLND…SLLESEDCKL (312 aa)). Positions 57–91 (KETMQFLNDRLASYLEKVRQLERDNAELENLIRER) are coil 1A. The segment at 92 to 102 (SQQQEPLLCPS) is linker 1. Residues 103–203 (YQSYFKTIEE…HEQEVNTLRC (101 aa)) form a coil 1B region. The segment at 204–219 (QLGDRLNVEVDAAPAV) is linker 12. The interval 220 to 363 (DLNQVLNETR…NTYRSLLESE (144 aa)) is coil 2. Positions 364-404 (DCKLPSNPCATTNACEKPIGSCVTNPCGPRSRCGPCNTFGY) are tail.

The protein belongs to the intermediate filament family.

In Homo sapiens (Human), this protein is Keratin, type I cuticular Ha3-II (KRT33B).